The sequence spans 91 residues: Islet amyloid polypeptide (91 aa).

Positions 1 to 22 are cleaved as a signal peptide; it reads MGILKLPVVLIVLCVALNHLEG. The propeptide occupies 23 to 33; the sequence is GGKPTESHQME. C37 and C42 are disulfide-bonded. Residue Y72 is modified to Tyrosine amide. Positions 78 to 91 are excised as a propeptide; sequence VEILKREPLSYLPI.

It belongs to the calcitonin family. Can form homodimers. Interacts with IDE and INS. Interaction with INS inhibits homodimerization and fibril formation.

It is found in the secreted. Functionally, amylin/IAPP is a glucoregulatory peptide hormone that plays an important role in the regulation of energy homeostasis. Selectively inhibits insulin-stimulated glucose utilization and glycogen deposition in muscle, while not affecting adipocyte glucose metabolism. IAPP function is mediated by the CALCR-RAMPs (AMYRs) receptor complexes. Amylin can also bind CALCR receptor in the absence of RAMPs, although it is more selective for AMYRs. The protein is Islet amyloid polypeptide (IAPP) of Bos taurus (Bovine).